Here is a 541-residue protein sequence, read N- to C-terminus: Malate synthase (541 aa).

Arg-172 acts as the Proton acceptor in catalysis. The active-site Proton donor is Asp-452.

This sequence belongs to the malate synthase family.

It localises to the cytoplasm. The enzyme catalyses glyoxylate + acetyl-CoA + H2O = (S)-malate + CoA + H(+). Its pathway is carbohydrate metabolism; glyoxylate cycle; (S)-malate from isocitrate: step 2/2. The chain is Malate synthase (mls) from Myxococcus xanthus (strain DK1622).